The primary structure comprises 231 residues: uncharacterized protein (231 aa).

Residues 43–76 form an SWIM-type zinc finger; that stretch reads YKVKVDLDNNYFGLCTCQYKYNCKHAYALIEAYE.

This is an uncharacterized protein from Methanocaldococcus jannaschii (strain ATCC 43067 / DSM 2661 / JAL-1 / JCM 10045 / NBRC 100440) (Methanococcus jannaschii).